We begin with the raw amino-acid sequence, 236 residues long: Eukaryotic translation initiation factor 3 subunit J (236 aa).

Positions 1–86 (MADDWESAAD…KEEEEQKRLA (86 aa)) are disordered. Residues 28 to 46 (GEDDDEDVKESWEDEEEKK) are compositionally biased toward acidic residues. Composition is skewed to basic and acidic residues over residues 47–58 (DEEKPTKTEAPV) and 68–86 (AKLE…KRLA). Positions 61–115 (KPNKALKAKLEEQERLKEEEEQKRLAEMTPEEKLAEKLRLQKIQEESDLKSALET) form a coiled coil.

The protein belongs to the eIF-3 subunit J family. Component of the eukaryotic translation initiation factor 3 (eIF-3) complex. The eIF-3 complex interacts with pix.

The protein resides in the cytoplasm. Component of the eukaryotic translation initiation factor 3 (eIF-3) complex, which is involved in protein synthesis of a specialized repertoire of mRNAs and, together with other initiation factors, stimulates binding of mRNA and methionyl-tRNAi to the 40S ribosome. The eIF-3 complex specifically targets and initiates translation of a subset of mRNAs involved in cell proliferation. The sequence is that of Eukaryotic translation initiation factor 3 subunit J from Drosophila mojavensis (Fruit fly).